Consider the following 1209-residue polypeptide: Nitric oxide synthase (1209 aa).

Position 103 (S103) interacts with (6R)-L-erythro-5,6,7,8-tetrahydrobiopterin. C181 lines the heme b pocket. L-arginine-binding residues include Q244, W353, Y354, E358, and N363. (6R)-L-erythro-5,6,7,8-tetrahydrobiopterin-binding residues include W444 and F457. Heme b is bound at residue Y472. Residues 491-511 (VHRKFHFKQIARAVKFTSKLF) are calmodulin-binding. Residues 521–723 (ATILYATETG…QFRAWSSKIF (203 aa)) form the Flavodoxin-like domain. 527–531 (TETGK) is an FMN binding site. The interval 603–622 (RGDGTSDLGSGTFKTPTPKS) is disordered. 669 to 700 (VFGLGSSAYPKFCHFGKTVDKILGDLGGERIL) is a binding site for FMN. An FAD-binding FR-type domain is found at 776 to 1021 (KQLITCKVKE…IRRAPSFHMP (246 aa)). FAD-binding positions include 811-822 (YDPGDHVGVLAC) and 954-964 (LQPRFYSISSS). Residues 1028 to 1147 (LILV…QQKL) and 1128 to 1143 (NGHF…AEEV) each bind NADP(+).

This sequence belongs to the NOS family. The cofactor is heme b. FAD is required as a cofactor. FMN serves as cofactor. Constitutively expressed at a low level in the larval fat body, hemocyte, Malpighian tubule, midgut, silk gland and adult antenna.

It carries out the reaction 2 L-arginine + 3 NADPH + 4 O2 + H(+) = 2 L-citrulline + 2 nitric oxide + 3 NADP(+) + 4 H2O. With respect to regulation, expression is dependent on and stimulated by NADPH, calcium, BH4 and calmodulin. The activity is not dependent on FAD and is not stimulated by its presence. In terms of biological role, produces nitric oxide (NO) which is a messenger molecule with diverse functions throughout the body. Involved in the induction of immune gene expression. This Bombyx mori (Silk moth) protein is Nitric oxide synthase.